Consider the following 602-residue polypeptide: Aspartate--tRNA(Asp/Asn) ligase (602 aa).

E170 contacts L-aspartate. Residues Q194–K197 form an aspartate region. R216 is a binding site for L-aspartate. Residues R216–E218 and Q225 contribute to the ATP site. H448 is a binding site for L-aspartate. Residue E482 coordinates ATP. R489 lines the L-aspartate pocket. G534–R537 lines the ATP pocket. The disordered stretch occupies residues G559–K602. Basic and acidic residues predominate over residues Q575–K602.

This sequence belongs to the class-II aminoacyl-tRNA synthetase family. Type 1 subfamily. In terms of assembly, homodimer.

The protein localises to the cytoplasm. The catalysed reaction is tRNA(Asx) + L-aspartate + ATP = L-aspartyl-tRNA(Asx) + AMP + diphosphate. Its function is as follows. Aspartyl-tRNA synthetase with relaxed tRNA specificity since it is able to aspartylate not only its cognate tRNA(Asp) but also tRNA(Asn). Reaction proceeds in two steps: L-aspartate is first activated by ATP to form Asp-AMP and then transferred to the acceptor end of tRNA(Asp/Asn). This Rhodococcus erythropolis (strain PR4 / NBRC 100887) protein is Aspartate--tRNA(Asp/Asn) ligase.